Consider the following 711-residue polypeptide: Serine/threonine-protein kinase ATG1b (711 aa).

The Protein kinase domain occupies 20 to 277 (YAVGRQIGSG…FEEFFHHPFL (258 aa)). ATP is bound by residues 26-34 (IGSGSFSVV) and Lys-49. Asp-142 serves as the catalytic Proton acceptor. Disordered stretches follow at residues 318 to 342 (LPFF…TSPM) and 383 to 419 (FEGH…SMDQ). A compositionally biased stretch (basic and acidic residues) spans 383-393 (FEGHRLSDRSQ). A compositionally biased stretch (polar residues) spans 394 to 410 (FKPSSLPDSRSFSTQGR). The short motif at 421-424 (YVLI) is the AIM (Atg8-family-interacting motif) element.

The protein belongs to the protein kinase superfamily. Ser/Thr protein kinase family.

It localises to the cytoplasmic vesicle. The protein resides in the autophagosome. Its function is as follows. Serine/threonine protein kinase involved in autophagy. The ATG1-ATG13 protein kinase complex regulates downstream events required for autophagosome enclosure and/or vacuolar delivery. This chain is Serine/threonine-protein kinase ATG1b, found in Arabidopsis thaliana (Mouse-ear cress).